The sequence spans 116 residues: Protein Wnt-5(III) (116 aa).

S1 carries O-palmitoleoyl serine; by PORCN lipidation. A glycan (N-linked (GlcNAc...) asparagine) is linked at N69. C82 and C97 form a disulfide bridge.

It belongs to the Wnt family. Palmitoleoylation is required for efficient binding to frizzled receptors. Depalmitoleoylation leads to Wnt signaling pathway inhibition.

The protein resides in the secreted. Its subcellular location is the extracellular space. It localises to the extracellular matrix. Functionally, ligand for members of the frizzled family of seven transmembrane receptors. Probable developmental protein. May be a signaling molecule which affects the development of discrete regions of tissues. Is likely to signal over only few cell diameters. The protein is Protein Wnt-5(III) (WNT-5(III)) of Eptatretus stoutii (Pacific hagfish).